Here is a 173-residue protein sequence, read N- to C-terminus: Photosystem I assembly protein Ycf3 (173 aa).

TPR repeat units follow at residues 35–68, 72–105, and 120–153; these read AFVY…EEDT, GYIL…NPRL, and GEKA…APNN.

The protein belongs to the Ycf3 family.

It is found in the cellular thylakoid membrane. Its function is as follows. Essential for the assembly of the photosystem I (PSI) complex. May act as a chaperone-like factor to guide the assembly of the PSI subunits. The chain is Photosystem I assembly protein Ycf3 from Trichormus variabilis (strain ATCC 29413 / PCC 7937) (Anabaena variabilis).